Consider the following 248-residue polypeptide: tRNA (guanine-N(1)-)-methyltransferase (248 aa).

S-adenosyl-L-methionine contacts are provided by residues glycine 116 and valine 136–leucine 141.

It belongs to the RNA methyltransferase TrmD family. Homodimer.

The protein localises to the cytoplasm. It carries out the reaction guanosine(37) in tRNA + S-adenosyl-L-methionine = N(1)-methylguanosine(37) in tRNA + S-adenosyl-L-homocysteine + H(+). In terms of biological role, specifically methylates guanosine-37 in various tRNAs. The chain is tRNA (guanine-N(1)-)-methyltransferase from Psychromonas ingrahamii (strain DSM 17664 / CCUG 51855 / 37).